The following is a 337-amino-acid chain: MLEKFERYPLTFGPTPIERLGRLSAHLGGQVELYAKREDCNSGLAFGGNKLRKLEYIVPDAIASGADTLVSIGGVQSNHTRMVAAVAAKIGMKCRLVQEAWVPHEDAVYDRVGNIMLSRILGADVRLVDDGFDIGIRSSWQEAIDDVKAKGGRPYAIPAGASVHKFGGLGYVGFAEEVRAQERDLGFTFDYIVVCTVTGSTHAGMVVGFAKDGRERRVIGIDASATPAQTKAQVLDIARRTADLVGLGRDLSADDVVLNEDYAYPVYGVPSQETKDAIRLCARLEGMITDPVYEGKSMQGMIDLVRKGFFPAGSKVLYAHLGGAPALNGYGYTFRNG.

K50 is modified (N6-(pyridoxal phosphate)lysine). Residue S77 is the Nucleophile of the active site.

The protein belongs to the ACC deaminase/D-cysteine desulfhydrase family. In terms of assembly, homotrimer. The cofactor is pyridoxal 5'-phosphate.

The enzyme catalyses 1-aminocyclopropane-1-carboxylate + H2O = 2-oxobutanoate + NH4(+). In terms of biological role, catalyzes a cyclopropane ring-opening reaction, the irreversible conversion of 1-aminocyclopropane-1-carboxylate (ACC) to ammonia and alpha-ketobutyrate. Allows growth on ACC as a nitrogen source. This chain is 1-aminocyclopropane-1-carboxylate deaminase, found in Methylobacterium nodulans (strain LMG 21967 / CNCM I-2342 / ORS 2060).